The primary structure comprises 470 residues: tRNA modification GTPase MnmE (470 aa).

(6S)-5-formyl-5,6,7,8-tetrahydrofolate contacts are provided by Lys-27, Glu-90, and Arg-129. The 161-residue stretch at 231-391 folds into the TrmE-type G domain; sequence GVSLVLAGKP…LRDFLNQRFL (161 aa). GTP is bound by residues 241–246, 260–266, and 285–288; these read NVGKSS, TPFPGTT, and DTAG. Residues Ser-245 and Thr-266 each contribute to the Mg(2+) site. Position 470 (Lys-470) interacts with (6S)-5-formyl-5,6,7,8-tetrahydrofolate.

The protein belongs to the TRAFAC class TrmE-Era-EngA-EngB-Septin-like GTPase superfamily. TrmE GTPase family. As to quaternary structure, homodimer. Heterotetramer of two MnmE and two MnmG subunits. K(+) is required as a cofactor.

The protein resides in the cytoplasm. Its function is as follows. Exhibits a very high intrinsic GTPase hydrolysis rate. Involved in the addition of a carboxymethylaminomethyl (cmnm) group at the wobble position (U34) of certain tRNAs, forming tRNA-cmnm(5)s(2)U34. The sequence is that of tRNA modification GTPase MnmE from Syntrophobacter fumaroxidans (strain DSM 10017 / MPOB).